The following is a 175-amino-acid chain: Crossover junction endodeoxyribonuclease RuvC (175 aa).

Residues Asp-8, Glu-69, and Asp-141 contribute to the active site. Mg(2+) contacts are provided by Asp-8, Glu-69, and Asp-141.

This sequence belongs to the RuvC family. In terms of assembly, homodimer which binds Holliday junction (HJ) DNA. The HJ becomes 2-fold symmetrical on binding to RuvC with unstacked arms; it has a different conformation from HJ DNA in complex with RuvA. In the full resolvosome a probable DNA-RuvA(4)-RuvB(12)-RuvC(2) complex forms which resolves the HJ. The cofactor is Mg(2+).

It is found in the cytoplasm. The enzyme catalyses Endonucleolytic cleavage at a junction such as a reciprocal single-stranded crossover between two homologous DNA duplexes (Holliday junction).. Its function is as follows. The RuvA-RuvB-RuvC complex processes Holliday junction (HJ) DNA during genetic recombination and DNA repair. Endonuclease that resolves HJ intermediates. Cleaves cruciform DNA by making single-stranded nicks across the HJ at symmetrical positions within the homologous arms, yielding a 5'-phosphate and a 3'-hydroxyl group; requires a central core of homology in the junction. The consensus cleavage sequence is 5'-(A/T)TT(C/G)-3'. Cleavage occurs on the 3'-side of the TT dinucleotide at the point of strand exchange. HJ branch migration catalyzed by RuvA-RuvB allows RuvC to scan DNA until it finds its consensus sequence, where it cleaves and resolves the cruciform DNA. The protein is Crossover junction endodeoxyribonuclease RuvC of Colwellia psychrerythraea (strain 34H / ATCC BAA-681) (Vibrio psychroerythus).